A 382-amino-acid polypeptide reads, in one-letter code: uncharacterized protein (382 aa).

The PE domain occupies 1–92 (MQFLSVIPEQ…GATAYRNTEF (92 aa)). Helical transmembrane passes span 23-43 (SALSASYAAAAGPTTAVVSAA), 155-175 (AAVAPLPSAGAGLAQVVNGVV), 203-223 (FIVAGQSALTGVALLQPAVVG), 230-250 (TFLTAGTSAATGLGLLTLAGV), 261-281 (LASGTAATGLGLLGSAGVQLF), 284-304 (AFLLAVPTALGGVGSLAIAVV), 315-335 (LVVPNVVAGIAALQTAGAQFA), and 347-367 (LGAPGIAVLQTAGGHFAQGIG).

This sequence belongs to the mycobacterial PE family.

Its subcellular location is the cell membrane. This is an uncharacterized protein from Mycobacterium bovis (strain ATCC BAA-935 / AF2122/97).